A 447-amino-acid polypeptide reads, in one-letter code: BAG family molecular chaperone regulator 5 (447 aa).

BAG domains follow at residues 9-86 (SISR…EQNA), 95-167 (QNIF…EDCM), 182-260 (SVAK…DLEE), 275-350 (SILK…DLKE), and 365-442 (SHKA…DLKS).

In terms of assembly, binds to the ATPase domain of HSP/HSP70 chaperones. Binds PRKN. Interacts with HSPA8 and JPH2. As to expression, expressed in the heart.

Its function is as follows. Co-chaperone for HSP/HSP70 proteins. It functions as a nucleotide-exchange factor promoting the release of ADP from HSP70, thereby activating HSP70-mediated protein refolding. Has an essential role in maintaining proteostasis at junctional membrane complexes (JMC), where it may function as a scaffold between the HSPA8 chaperone and JMC proteins enabling correct, HSPA8-dependent JMC protein folding. Inhibits both auto-ubiquitination of PRKN and ubiquitination of target proteins by PRKN. The sequence is that of BAG family molecular chaperone regulator 5 (BAG5) from Homo sapiens (Human).